The following is a 579-amino-acid chain: Mycobactin import ATP-binding/permease protein IrtB (579 aa).

Topologically, residues 1–25 (MIRTLLRLVPAEKRGAVAGYAVLTL) are cytoplasmic. Residues 21 to 299 (AVLTLLSVLL…IADLAPALET (279 aa)) form the ABC transmembrane type-1 domain. Residues 26 to 46 (LSVLLRAVGAVLLIPLLAALF) form a helical membrane-spanning segment. Over 47 to 48 (SD) the chain is Periplasmic. Residues 49 to 69 (TPSDAWLWLGWLTAVTLAGWV) form a helical membrane-spanning segment. The Cytoplasmic portion of the chain corresponds to 70-126 (TDTNTARLGFDLGFAVLSRTQHDMADRLPNVAMSWFTPDNTATARQAIAATGPELAG). Helical transmembrane passes span 127–147 (LVVN…AIGV) and 148–168 (ALLF…AVLF). The Cytoplasmic segment spans residues 169 to 241 (GALALSGRLS…RLLTMQIPGQ (73 aa)). The helical transmembrane segment at 242–262 (VLFSLAGQVALIGFAGMAVWL) threads the bilayer. The Periplasmic portion of the chain corresponds to 263 to 272 (TVRGQLGVPE). Residues 273–293 (AIALIVVLVRYLEPFAAIADL) form a helical membrane-spanning segment. The Cytoplasmic segment spans residues 294-579 (APALETTRAT…SEWAIGSTAR (286 aa)). Residues 332–565 (IEFDDVRFSY…GGRFAQFWAQ (234 aa)) enclose the ABC transporter domain. 364–371 (GPSGSGKT) contacts ATP.

This sequence belongs to the ABC transporter superfamily. Siderophore-Fe(3+) uptake transporter (SIUT) (TC 3.A.1.21) family. As to quaternary structure, forms a heterodimer with IrtA.

It is found in the cell inner membrane. Its activity is regulated as follows. The ATPase activity of IrtAB is stimulated more than 38-fold in the presence of Fe-MBT, and more than 10-fold in the presence of Fe-cMBT. In terms of biological role, part of the ABC transporter complex IrtAB involved in the import of iron-bound mycobactin (Fe-MBT) and carboxymycobactin (Fe-cMBT). Has a preference for Fe-MBT over Fe-cMBT. Transmembrane domains (TMD) form a pore in the membrane and the ATP-binding domain (NBD) is responsible for energy generation. The chain is Mycobactin import ATP-binding/permease protein IrtB from Mycolicibacterium thermoresistibile (strain ATCC 19527 / DSM 44167 / CIP 105390 / JCM 6362 / NCTC 10409 / 316) (Mycobacterium thermoresistibile).